The primary structure comprises 164 residues: Putative pre-16S rRNA nuclease (164 aa).

This sequence belongs to the YqgF nuclease family.

It is found in the cytoplasm. Its function is as follows. Could be a nuclease involved in processing of the 5'-end of pre-16S rRNA. In Rhizobium etli (strain CIAT 652), this protein is Putative pre-16S rRNA nuclease.